We begin with the raw amino-acid sequence, 101 residues long: Small ribosomal subunit protein bS18c (101 aa).

It belongs to the bacterial ribosomal protein bS18 family. As to quaternary structure, part of the 30S ribosomal subunit.

The protein localises to the plastid. The protein resides in the chloroplast. The chain is Small ribosomal subunit protein bS18c from Oenothera biennis (German evening primrose).